The sequence spans 464 residues: Alpha-amylase (464 aa).

The signal sequence occupies residues Met1–Ala21. The substrate site is built by His107 and Arg213. The Nucleophile role is filled by Asp215. Residue Lys218–His219 coordinates substrate. Glu242 functions as the Proton donor in the catalytic mechanism. Substrate-binding residues include Gly247 and His313.

Belongs to the glycosyl hydrolase 13 family.

It localises to the secreted. It catalyses the reaction Endohydrolysis of (1-&gt;4)-alpha-D-glucosidic linkages in polysaccharides containing three or more (1-&gt;4)-alpha-linked D-glucose units.. This Aeromonas hydrophila protein is Alpha-amylase.